Here is a 393-residue protein sequence, read N- to C-terminus: Flavohemoprotein (393 aa).

Residues Met1 to Glu139 enclose the Globin domain. Residue His85 coordinates heme b. Catalysis depends on charge relay system residues Tyr95 and Glu138. The reductase stretch occupies residues Gly150–Ala393. The FAD-binding FR-type domain maps to Arg153–Arg256. FAD-binding positions include Tyr191 and Arg205–Ser208. Gly268–Pro273 lines the NADP(+) pocket. Phe384–Pro387 contacts FAD.

The protein belongs to the globin family. Two-domain flavohemoproteins subfamily. This sequence in the C-terminal section; belongs to the flavoprotein pyridine nucleotide cytochrome reductase family. Requires heme b as cofactor. FAD serves as cofactor.

It catalyses the reaction 2 nitric oxide + NADPH + 2 O2 = 2 nitrate + NADP(+) + H(+). The enzyme catalyses 2 nitric oxide + NADH + 2 O2 = 2 nitrate + NAD(+) + H(+). Functionally, is involved in NO detoxification in an aerobic process, termed nitric oxide dioxygenase (NOD) reaction that utilizes O(2) and NAD(P)H to convert NO to nitrate, which protects the bacterium from various noxious nitrogen compounds. Therefore, plays a central role in the inducible response to nitrosative stress. In Pseudomonas aeruginosa (strain ATCC 15692 / DSM 22644 / CIP 104116 / JCM 14847 / LMG 12228 / 1C / PRS 101 / PAO1), this protein is Flavohemoprotein.